Consider the following 417-residue polypeptide: Frizzy aggregation protein FrzCD (417 aa).

Positions 1-11 are enriched in basic and acidic residues; the sequence is MSLDTPNEKPA. The disordered stretch occupies residues 1–34; it reads MSLDTPNEKPAGKARARKAPASKAGATNAASTSS. A compositionally biased stretch (low complexity) spans 21-34; that stretch reads ASKAGATNAASTSS. Residues 144-380 form the Methyl-accepting transducer domain; it reads AALRLSSSAN…QVVASMAEIE (237 aa).

It belongs to the methyl-accepting chemotaxis (MCP) protein family. Post-translationally, methylated. Saturated fatty acids capric acid and lauric acid stimulate methylation. Short-chain alcohols, such as isoamyl alcohol, and some other solvents cause demethylation.

The protein localises to the cytoplasm. Methyl-accepting taxis protein necessary for the proper aggregation of cells to form fruiting bodies. Frz genes define a system of signal transduction analogous to the enterobacterial chemotaxis systems. In Myxococcus xanthus, this protein is Frizzy aggregation protein FrzCD (frzCD).